The following is a 748-amino-acid chain: MTRRTTINPDSVVLNPQKFIQKERADSKIKVDQVNTFLESSPERRTLTHALIDQIVNDPILKTDTDYYDAKKMQEREITAKKIARLASYMEHDIKTVRKHFRDTDLMKELQANDPDKASPLTNKDLFIFDKRLSLVANIDPQLGTRVGVHLGLFGNCIKGNGTDEQIRYWLQERGATLMKGIYGCFAMTELGHGSNVAQLQTRAVYDKQNDTFVIDTPDLTATKWWIGGAAHSATHAAVYARLIVEGKDYGVKTFVVPLRDPSTFQLLAGVSIGDIGAKMGRDGIDNGWIQFRNVVIPREFMLSRFTKVVRSPDGSVTVKTEPQLDQISGYSALLSGRVNMVMDSFRFGSKFATIAVRYAVGRQQFAPRKGLSETQLIDYPLHQYRVLPQLCVPYLVSPVAFKLMDNYYSTLDELYNASSSAYKAALVTVSKKLKNLFIDSASLKATNTWLIATLIDELRQTCGGHGYSQYNGFGKGYDDWVVQCTWEGDNNVLSLTSAKSILKKFIDSATKGRFDNTLDVDSFSYLKPQYIGSVVSGEIKSGLKELGDYTEIWSITLIKLLAHIGTLVEKSRSIDSVSKLLVLVSKFHALRCMLKTYYDKLNSRDSHISDEITKESMWNVYKLFSLYFIDKHSGEFQQFKIFTPDQISKVVQPQLLALLPIVRKDCIGLTDSFELPDAMLNSPIGYFDGDIYHNYFNEVCRNNPVEADGAGKPSYHALLSSMLGRGFEFDQKLGGAANAEILSKINK.

The protein belongs to the acyl-CoA oxidase family. In terms of assembly, homooctamer. Requires FAD as cofactor.

The protein localises to the peroxisome. It catalyses the reaction a 2,3-saturated acyl-CoA + O2 = a (2E)-enoyl-CoA + H2O2. It functions in the pathway lipid metabolism; peroxisomal fatty acid beta-oxidation. The sequence is that of Acyl-coenzyme A oxidase (POX1) from Saccharomyces cerevisiae (strain ATCC 204508 / S288c) (Baker's yeast).